The chain runs to 353 residues: Phospho-furanose lactonase (353 aa).

Residues H24, H26, K153, H186, and H214 each contribute to the Zn(2+) site. K153 carries the N6-carboxylysine modification. A substrate-binding site is contributed by 244–245 (KY). D272 is a binding site for Zn(2+). 275–278 (RILY) serves as a coordination point for substrate.

This sequence belongs to the metallo-dependent hydrolases superfamily. Phosphotriesterase family. Zn(2+) serves as cofactor.

The catalysed reaction is a 1,4-lactone + H2O = a 4-hydroxyacid + H(+). It catalyses the reaction D-xylono-1,4-lactone 5-phosphate + H2O = 5-phospho-D-xylonate + H(+). The enzyme catalyses L-arabino-1,4-lactone 5-phosphate + H2O = 5-phospho-L-arabinonate + H(+). Its function is as follows. Catalyzes the hydrolysis of D-xylono-1,4-lactone-5-phosphate and L-arabino-1,4-lactone-5-phosphate. Also able to hydrolyze carboxy 1,4-lactones. In Mycoplasmopsis synoviae (strain 53) (Mycoplasma synoviae), this protein is Phospho-furanose lactonase.